The sequence spans 386 residues: Succinate--CoA ligase [ADP-forming] subunit beta (386 aa).

Residues 9-244 enclose the ATP-grasp domain; the sequence is KELFANYGVP…LDEEEPLEVE (236 aa). Residues Lys46, 53–55, Glu99, Leu102, and Glu107 each bind ATP; that span reads GRG. Residues Asn199 and Asp213 each coordinate Mg(2+). Substrate-binding positions include Asn264 and 321 to 323; that span reads GIL.

Belongs to the succinate/malate CoA ligase beta subunit family. Heterotetramer of two alpha and two beta subunits. Requires Mg(2+) as cofactor.

It carries out the reaction succinate + ATP + CoA = succinyl-CoA + ADP + phosphate. It catalyses the reaction GTP + succinate + CoA = succinyl-CoA + GDP + phosphate. It functions in the pathway carbohydrate metabolism; tricarboxylic acid cycle; succinate from succinyl-CoA (ligase route): step 1/1. In terms of biological role, succinyl-CoA synthetase functions in the citric acid cycle (TCA), coupling the hydrolysis of succinyl-CoA to the synthesis of either ATP or GTP and thus represents the only step of substrate-level phosphorylation in the TCA. The beta subunit provides nucleotide specificity of the enzyme and binds the substrate succinate, while the binding sites for coenzyme A and phosphate are found in the alpha subunit. The polypeptide is Succinate--CoA ligase [ADP-forming] subunit beta (Desulfatibacillum aliphaticivorans).